Consider the following 368-residue polypeptide: MDSYEYSELLKKLEQKIENIKNIIKPDLITKRLKEIEQLENSPDFWNDAKKAGEIQKEKNRLSRILEKFEEARSSVEDAKDLFEMATEEEDTETLNMLFEEAPTLEEKVNKIEIETMLSGENDDKNAIVTIHPGAGGTESQDWASILYRMYLRWAERHGFKVEVLDYQEGEEAGIKDVSFIIKGENAYGYLKAENGIHRLVRISPFDSNARRHTSFASVMVSPEVDDDINIVIEDKDIRVDTYRASGAGGQHVNKTDSAIRITHIPTGIVVQCQNDRSQHKNRATAMKMLKSRLYELELEKKRAEQEGIEKSDIGWGHQIRSYVLAPYQQVKDTRSNKAYSNVEAILDGDIDKIIEDVLIAEAEKESK.

N5-methylglutamine is present on Q251.

Belongs to the prokaryotic/mitochondrial release factor family. Methylated by PrmC. Methylation increases the termination efficiency of RF2.

Its subcellular location is the cytoplasm. Its function is as follows. Peptide chain release factor 2 directs the termination of translation in response to the peptide chain termination codons UGA and UAA. This chain is Peptide chain release factor 2, found in Nitratiruptor sp. (strain SB155-2).